The primary structure comprises 93 residues: Small ribosomal subunit protein uS19 (93 aa).

The protein belongs to the universal ribosomal protein uS19 family.

Functionally, protein S19 forms a complex with S13 that binds strongly to the 16S ribosomal RNA. This Thermoanaerobacter pseudethanolicus (strain ATCC 33223 / 39E) (Clostridium thermohydrosulfuricum) protein is Small ribosomal subunit protein uS19.